We begin with the raw amino-acid sequence, 330 residues long: Alpha-1,6-glucosyltransferase (330 aa).

This sequence belongs to the glycosyltransferase group 1 family. Does not require a metal cofactor. serves as cofactor.

It localises to the cytoplasm. The protein operates within protein modification; protein glycosylation. Its function is as follows. Catalyzes the transfer of a glucose moiety from UDP-glucose to another glucose that is N-linked to an asparagine within a peptide or protein. Can act in a repetitive manner, and this way it elongates the N-linked glucose by a glycan chain consisting of several alpha-1-&gt;6 linked glucose residues. Is able to add up to six glucose units in vitro. Cannot use UDP-Gal, UDP-GlcNAc or UDP-GalNAc as a substrate donor. The polypeptide is Alpha-1,6-glucosyltransferase (Actinobacillus pleuropneumoniae serotype 7 (strain AP76)).